Reading from the N-terminus, the 348-residue chain is Phosphate acyltransferase (348 aa).

It belongs to the PlsX family. Homodimer. Probably interacts with PlsY.

Its subcellular location is the cytoplasm. It catalyses the reaction a fatty acyl-[ACP] + phosphate = an acyl phosphate + holo-[ACP]. The protein operates within lipid metabolism; phospholipid metabolism. Catalyzes the reversible formation of acyl-phosphate (acyl-PO(4)) from acyl-[acyl-carrier-protein] (acyl-ACP). This enzyme utilizes acyl-ACP as fatty acyl donor, but not acyl-CoA. This chain is Phosphate acyltransferase, found in Francisella tularensis subsp. novicida (strain U112).